We begin with the raw amino-acid sequence, 1427 residues long: Multidrug resistance-associated protein 5 (1427 aa).

Residues 1–147 (MPSDSEEVCL…IYRFISTRLW (147 aa)) are Cytoplasmic-facing. The chain crosses the membrane as a helical span at residues 148 to 168 (FSCAVFFFCLIFGFIGPTCFI). The ABC transmembrane type-1 1 domain maps to 151 to 432 (AVFFFCLIFG…IPYGSRYLAE (282 aa)). At 169–185 (RRLIAFAENPERDEQSR) the chain is on the extracellular side. The chain crosses the membrane as a helical span at residues 186-206 (IVYSYGIALVAAISVVEFARV). Over 207–268 (LSYGATWAVS…RLFDAVTFAP (62 aa)) the chain is Cytoplasmic. Residues 269–289 (LVLVGPLVLVGGIGYLLMVIG) form a helical membrane-spanning segment. Position 290 (arginine 290) is a topological domain, extracellular. Residues 291–311 (WSLLGILVFFVFDVIQFGLGK) form a helical membrane-spanning segment. Over 312 to 375 (SMVACRNLAI…RKSGYAQSLA (64 aa)) the chain is Cytoplasmic. Residues 376–396 (IACGPVVPVVAAILTFVGVVL) form a helical membrane-spanning segment. The Extracellular portion of the chain corresponds to 397 to 399 (AGN). The chain crosses the membrane as a helical span at residues 400 to 420 (DLLASDAFSAITVYFVMLFGI). Residues 421–770 (RMIPYGSRYL…TIAWRIYKQY (350 aa)) are Cytoplasmic-facing. Residues 486–707 (PTENEVIVVE…NDAYKTFVDA (222 aa)) enclose the ABC transporter 1 domain. 518-525 (GAVGCGKS) is an ATP binding site. A helical transmembrane segment spans residues 771 to 791 (IHAAGGWPIWTCLVIGFIVNV). An ABC transmembrane type-1 2 domain is found at 783-1078 (LVIGFIVNVV…AVRTQTELEA (296 aa)). The Extracellular segment spans residues 792–833 (VSNIFSTYWLSRWLKKGHDETTTITNGTEFLEMKTSLADSPV). The N-linked (GlcNAc...) asparagine glycan is linked to asparagine 817. A helical membrane pass occupies residues 834 to 854 (TGFYAAVYLVALVVLTISGLF). At 855–909 (KACVFVKVSLTAATRLHDRMFQAVIHGATSFFDSTPTGRILNRFSKDMDEIDVKL) the chain is on the cytoplasmic side. Residues 910-930 (PFTAEVFLQNMITCLGFLVVI) form a helical membrane-spanning segment. Residue threonine 931 is a topological domain, extracellular. Residues 932-952 (SVFPYFLLFAIPLFVVFVVFV) form a helical membrane-spanning segment. The Cytoplasmic portion of the chain corresponds to 953 to 1022 (SCFRAGIRNL…MFQSAMRWLA (70 aa)). A helical membrane pass occupies residues 1023 to 1043 (VWLDLLVVVMTAIVALLTVML). The Extracellular segment spans residues 1044 to 1049 (TGTVSP). The chain crosses the membrane as a helical span at residues 1050–1070 (ADAGMAIAFAVQMSGIFQFAV). Topologically, residues 1071-1427 (RTQTELEAKM…SSDTDIEVVQ (357 aa)) are cytoplasmic. The ABC transporter 2 domain occupies 1117-1351 (INFSEVNLRY…DWSVYKLEDK (235 aa)). 1151 to 1158 (GRTGSGKS) contacts ATP. Residues 1361–1427 (VGENSEHSME…SSDTDIEVVQ (67 aa)) are disordered. Positions 1382–1418 (DIVKVENEQKDSSDDVVHIESGDDDVKADSSEVKETS) are enriched in basic and acidic residues.

It belongs to the ABC transporter superfamily. ABCC family. Conjugate transporter (TC 3.A.1.208) subfamily. Highly expressed in the intestine and pharynx. Expressed at low levels in the hypodermis and in some neurons.

The protein resides in the basolateral cell membrane. In terms of biological role, heme transporter required for the export of intestinal heme to different tissues and subcellular compartments. Also, required for the export of vitamin B12 from the intestine of the mother to the embryo to support embryonic development. The sequence is that of Multidrug resistance-associated protein 5 from Caenorhabditis elegans.